The primary structure comprises 259 residues: Ovulation prohormone (259 aa).

Residues 1-34 form the signal peptide; sequence MKMSGLLSKPDYGVVGIVFTVVFCCWCSSSTTHA. Positions 35 to 102 are excised as a propeptide; sequence LSIAEPGRDR…SGEKTRLTAA (68 aa). The interval 42–103 is disordered; the sequence is RDRYDKRSPT…GEKTRLTAAK (62 aa). 2 consecutive repeats follow at residues 119 to 123 and 146 to 150; these read RLRFH. A 2 X 5 AA repeats of R-L-R-F-H region spans residues 119–150; that stretch reads RLRFHKRRVDSADESNDDGFDRKAREPRLRFH. Residues 149-197 form a disordered region; that stretch reads FHDVRKRSATAEEGSENAEIEESHLGNSRSRRSAGSAPSSANEVQRSKR. The propeptide occupies 181-195; it reads SAGSAPSSANEVQRS. Leu233 bears the Leucine amide mark. The propeptide occupies 237–259; that stretch reads GSAFFDHIPIIFGEPQYDYQPFK.

It belongs to the molluscan ELH family.

It localises to the secreted. In terms of biological role, CDCH induces ovulation and egg-mass production; it may also stimulate synthesis of secretory products in the female accessory sex glands and affect neurons in the neuronal circuits controlling locomotion and feeding. Its function is as follows. Calfluxin is involved in the influx of calcium into mitochondria of the albumen gland. Functionally, CDCA (or alpha-CDCP) triggers the electrical activity of the caudodorsal cells (CDCS). In Lymnaea stagnalis (Great pond snail), this protein is Ovulation prohormone.